The primary structure comprises 170 residues: Peptide deformylase (170 aa).

Residues Cys91 and His133 each contribute to the Fe cation site. Glu134 is a catalytic residue. Residue His137 coordinates Fe cation.

It belongs to the polypeptide deformylase family. Fe(2+) serves as cofactor.

It carries out the reaction N-terminal N-formyl-L-methionyl-[peptide] + H2O = N-terminal L-methionyl-[peptide] + formate. In terms of biological role, removes the formyl group from the N-terminal Met of newly synthesized proteins. Requires at least a dipeptide for an efficient rate of reaction. N-terminal L-methionine is a prerequisite for activity but the enzyme has broad specificity at other positions. This Histophilus somni (strain 129Pt) (Haemophilus somnus) protein is Peptide deformylase.